Reading from the N-terminus, the 506-residue chain is Hexokinase-6 (506 aa).

The helical transmembrane segment at 6 to 26 (VVGTAVVVCAAAAAAVGVAVV) threads the bilayer. Positions 43–497 (RRAAAVIEEV…SGIGAALLAA (455 aa)) constitute a Hexokinase domain. Positions 98-236 (TGDEHGLFYA…GLDMKVTALV (139 aa)) are hexokinase small subdomain. ADP contacts are provided by Gly-112, Thr-113, and Asn-114. Residues Thr-202, Lys-203, Asn-237, and Asp-238 each coordinate D-glucose. Residues 237 to 486 (NDTVGTLAGG…SSVVVKLAND (250 aa)) are hexokinase large subdomain. Position 261 (Thr-261) interacts with ADP. 3 residues coordinate D-glucose: Asn-264, Glu-292, and Glu-323. Gly-451 contributes to the ADP binding site.

Belongs to the hexokinase family. In terms of tissue distribution, expressed in roots, leaves, flowers, immature seeds and endosperm.

Its subcellular location is the plastid. It is found in the chloroplast outer membrane. The catalysed reaction is a D-hexose + ATP = a D-hexose 6-phosphate + ADP + H(+). It carries out the reaction D-fructose + ATP = D-fructose 6-phosphate + ADP + H(+). The enzyme catalyses D-glucose + ATP = D-glucose 6-phosphate + ADP + H(+). It participates in carbohydrate metabolism; hexose metabolism. Its pathway is carbohydrate degradation; glycolysis; D-glyceraldehyde 3-phosphate and glycerone phosphate from D-glucose: step 1/4. In terms of biological role, fructose and glucose phosphorylating enzyme. Functions as a glucose sensor for plant growth and photosynthesis. This chain is Hexokinase-6 (HXK6), found in Oryza sativa subsp. japonica (Rice).